Consider the following 1357-residue polypeptide: MNVYDDVLDATVVSHSLATHFTTSDYEELLVVRTNILSVYRPTRDGKLYLTDEFKFHGLITDIGLIPQKDSPLSCLLLCTGVAKISILKFNTLTNSIDTLSLHYYEGKFKGKSLVELAKISTLRMDPGSSCALLFNNDIIAFLPFHVNKNDDDEEEEDEDENIDDSELIHSMNQKSQGTNTFNKRKRTKLGDKFTAPSVVLVASELYEGAKNIIDIQFLKNFTKPTIALLYQPKLVWAGNTTISKLPTQYVILTLNIQPAESATKIESTTIAFVKELPWDLHTIVPVSNGAIIVGTNELAFLDNTGVLQSTVLLNSFADKELQKTKIINNSSLEIMFREKNTTSIWIPSSKSKNGGSNNDETLLLMDLKSNIYYIQMEAEGRLLIKFDIFKLPIVNDLLKENSNPKCITRLNATNSNKNMDLFIGFGSGNALVLRLNNLKSTIETREAHNPSSGTNSLMDINDDDDEEMDDLYADEAPENGLTTNDSKGTVETVQPFDIELLSSLRNVGPITSLTVGKVSSIDDVVKGLPNPNKNEYSLVATSGNGSGSHLTVIQTSVQPEIELALKFISITQIWNLKIKGRDRYLITTDSTKSRSDIYESDNNFKLHKGGRLRRDATTVYISMFGEEKRIIQVTTNHLYLYDTHFRRLTTIKFDYEVIHVSVMDPYILVTVSRGDIKIFELEEKNKRKLLKVDLPEILNEMVITSGLILKSNMCNEFLIGLSKSQEEQLLFTFVTADNQIIFFTKDHNDRIFQLNGVDQLNESLYISTYQLGDEIVPDPSIKQVMINKLGHDNKEEYLTILTFGGEIYQYRKLPQRRSRFYRNVTRNDLAITGAPDNAYAKGVSSIERIMHYFPDYNGYSVIFVTGSVPYILIKEDDSTPKIFKFGNIPLVSVTPWSERSVMCVDDIKNARVYTLTTDNMYYGNKLPLKQIKISNVLDDYKTLQKLVYHERAQLFLVSYCKRVPYEALGEDGEKVIGYDENVPHAEGFQSGILLINPKSWKVIDKIDFPKNSVVNEMRSSMIQINSKTKRKREYIIAGVANATTEDTPPTGAFHIYDVIEVVPEPGKPDTNYKLKEIFQEEVSGTVSTVCEVSGRFMISQSQKVLVRDIQEDNSVIPVAFLDIPVFVTDSKSFGNLLIIGDAMQGFQFIGFDAEPYRMISLGRSMSKFQTMSLEFLVNGGDMYFAATDADRNVHVLKYAPDEPNSLSGQRLVHCSSFTLHSTNSCMMLLPRNEEFGSPQVPSFQNVGGQVDGSVFKIVPLSEEKYRRLYVIQQQIIDRELQLGGLNPRMERLANDFYQMGHSMRPMLDFNVIRRFCGLAIDRRKSIAQKAGRHAHFEAWRDIINIEFSMRSLCQGK.

Positions 445 to 465 (TREAHNPSSGTNSLMDINDDD) are disordered. Residues 450-459 (NPSSGTNSLM) are compositionally biased toward polar residues.

Belongs to the CFT1 family. In terms of assembly, component of the cleavage and polyadenylation factor (CPF) complex, which is composed of at least PTI1, SYC1, SSU72, GLC7, MPE1, REF2, PFS2, PTA1, YSH1/BRR5, SWD2, CFT2/YDH1, YTH1, CFT1/YHH1, FIP1 and PAP1. Interacts with the phosphorylated CTD domain of RPB1/RNA polymerase II.

It is found in the nucleus. Functionally, RNA-binding component of the cleavage and polyadenylation factor (CPF) complex, which plays a key role in polyadenylation-dependent pre-mRNA 3'-end formation and cooperates with cleavage factors including the CFIA complex and NAB4/CFIB. Involved in poly(A) site recognition. May be involved in coupling transcription termination and mRNA 3'-end formation. The polypeptide is Protein CFT1 (CFT1) (Saccharomyces cerevisiae (strain ATCC 204508 / S288c) (Baker's yeast)).